The following is a 407-amino-acid chain: MKRAFIMVLDSFGIGATEDAERFGDVGADTLGHIAEACAKGEADNGRKGPLNLPNLTRLGLAKAHEGSTGFIPAGMDGNAEVIGAYAWAHEMSSGKDTPSGHWEIAGVPVLFEWGYFSDHENSFPQELLDKLVERANLPGYLGNCHSSGTVILDQLGEEHMKTGKPIFYTSADSVFQIACHEETFGLDKLYKLCEIAREELTNGGYNIGRVIARPFIGDKAGNFQRTGNRHDLAVEPPAPTVLQKLVDEKHGQVVSVGKIADIYANCGITKKVKATGLDALFDATIKEMKEAGDNTIVFTNFVDFDSSWGHRRDVAGYAAGLELFDRRLPELMSLLRDDDILILTADHGCDPTWTGTDHTREHIPVLVYGPKVKPGSLGHRETFADIGQTLAKYFGTSDMEYGKAMF.

Mn(2+) is bound by residues D10, D306, H311, D347, H348, and H359.

Belongs to the phosphopentomutase family. The cofactor is Mn(2+).

Its subcellular location is the cytoplasm. The catalysed reaction is 2-deoxy-alpha-D-ribose 1-phosphate = 2-deoxy-D-ribose 5-phosphate. The enzyme catalyses alpha-D-ribose 1-phosphate = D-ribose 5-phosphate. Its pathway is carbohydrate degradation; 2-deoxy-D-ribose 1-phosphate degradation; D-glyceraldehyde 3-phosphate and acetaldehyde from 2-deoxy-alpha-D-ribose 1-phosphate: step 1/2. In terms of biological role, isomerase that catalyzes the conversion of deoxy-ribose 1-phosphate (dRib-1-P) and ribose 1-phosphate (Rib-1-P) to deoxy-ribose 5-phosphate (dRib-5-P) and ribose 5-phosphate (Rib-5-P), respectively. This chain is Phosphopentomutase, found in Escherichia coli O127:H6 (strain E2348/69 / EPEC).